Here is a 317-residue protein sequence, read N- to C-terminus: ATP synthase gamma chain (317 aa).

The protein belongs to the ATPase gamma chain family. In terms of assembly, F-type ATPases have 2 components, CF(1) - the catalytic core - and CF(0) - the membrane proton channel. CF(1) has five subunits: alpha(3), beta(3), gamma(1), delta(1), epsilon(1). CF(0) has three main subunits: a, b and c.

It localises to the cellular thylakoid membrane. Its function is as follows. Produces ATP from ADP in the presence of a proton gradient across the membrane. The gamma chain is believed to be important in regulating ATPase activity and the flow of protons through the CF(0) complex. This chain is ATP synthase gamma chain, found in Synechococcus sp. (strain CC9311).